A 1229-amino-acid polypeptide reads, in one-letter code: MIARVCRLTKHSKPPHLPITLTTPTLFLVVLVLLQLHPICVLVNVDDGGGVTVKAISLLYSRKWNVKVINAVNAGLNASLAARNWTVAPGVNVEVVRPPSYDIDPAQFLDVYLKVLNDDKSLLVVLGPMGNDDAEKLYDTLEENRLVGFGPMTVSTRHEGYMPHLYFLRPEATGESYCPSTLCGESLRVLRQGFMYLDGLLGGSEAYDHAVDFISRMGYSFCCVFTVEDKAGGQGGSSEEFDAVWDEFAGGNPQAVIMFATMKPDAKKFLVRLVSDPRTEDTFVLTPIFLQKSIVSIWKETLEEANVPLHPHRVIQTGSNPLAKEDYIDAIKRFQTEMRNYLTEYKEWSGFNDADHFLKNDADGELMVNGWIAGEVLRRALRSHGWMNTATAFLESLYEQRRYVIDDIVVGDFGGECDSFTSANGATCRCNRGGKNVYMREIAEDYRLQPLVGGHIMTTPLQCHIDPSILRPPLTGLTVDMEDHEELLRGSTQFETGVSTTTSSGKAGEMNSFFLQKVVTDTQKVSNELNTLRQERIVTAVFGIVTKAVLGLPGLTFIDPITPTPHLNSFSRNVIHLSPTLEQQLYVLVNYLSSIRADFPNCVIRGGEAPAIIDALRKTLVTFGLNLSSTVVLTPGDTVGEHLPKSGITFIIGLAVDDIVVIEEHLRIHTKARVLVQFSDIALLYNEFVQAFNNSDGAKHLLFATSLPHWADVDTTSETVRRFHEAVREVEKWTPLSLLGFTTGRLIQENLQNMERVTSDLLVDLFFNQTVITIDDMHYGPYKHYDCIINGVVTADDCMANFGATDISVWSMARALRSDEPLLQNPMSPSLVYTVPNGNALTPAQLAGVVGGSLFVVALAICLSVLACFTLRGTRDNDSAPKEPTGPVTLIFTDIESSTALWAAHPDLMPDAVATHHRLIRSLITRYECYEVKTVGDSFMIASKSPFAAVQLAQELQLRFLRLDWETNALDESYREFEEQRAEGECEYTPPTAHMDPEVYSRLWNGLRVRVGIHTGLCDIRYDEVTKGYDYYGRTSNMAARTESVANGGQVLMTHAAYMSLSGEDRNQLDVTTLGATVLRGVPEPVRMYQLNAVPGRNFAALRLDRELFNDGEDETTTSCSDHSSLRAELSIAAQTIAASLQSLLGTFTPAQRQKALTPFCERCGVTLPRKMGHVWDNDSCQEVIRRIAAKVGHVVDRHAAETRERSVCTLSSGSVIIISNDLSDMIRV.

The Cytoplasmic segment spans residues 1–24; it reads MIARVCRLTKHSKPPHLPITLTTP. The chain crosses the membrane as a helical span at residues 25 to 45; the sequence is TLFLVVLVLLQLHPICVLVNV. At 46–845 the chain is on the extracellular side; that stretch reads DDGGGVTVKA…PNGNALTPAQ (800 aa). 5 N-linked (GlcNAc...) asparagine glycosylation sites follow: N77, N84, N626, N693, and N768. A helical transmembrane segment spans residues 846–866; sequence LAGVVGGSLFVVALAICLSVL. Over 867 to 1229 the chain is Cytoplasmic; the sequence is ACFTLRGTRD…SNDLSDMIRV (363 aa). The region spanning 889–1043 is the Guanylate cyclase domain; the sequence is TLIFTDIESS…RTSNMAARTE (155 aa). Positions 894 and 937 each coordinate Mg(2+).

Belongs to the adenylyl cyclase class-3 family. It depends on Mg(2+) as a cofactor.

It is found in the membrane. It catalyses the reaction ATP = 3',5'-cyclic AMP + diphosphate. Functionally, could act as a receptor for an unknown ligand. This chain is Receptor-type adenylate cyclase GRESAG 4.3 (GRESAG 4.3), found in Trypanosoma brucei brucei.